A 132-amino-acid chain; its full sequence is Small ribosomal subunit protein uS8 (132 aa).

It belongs to the universal ribosomal protein uS8 family. In terms of assembly, part of the 30S ribosomal subunit. Contacts proteins S5 and S12.

Functionally, one of the primary rRNA binding proteins, it binds directly to 16S rRNA central domain where it helps coordinate assembly of the platform of the 30S subunit. In Mycolicibacterium smegmatis (strain ATCC 700084 / mc(2)155) (Mycobacterium smegmatis), this protein is Small ribosomal subunit protein uS8.